Here is a 102-residue protein sequence, read N- to C-terminus: Pole-localizer protein TmaR (102 aa).

A coiled-coil region spans residues 7–34; sequence IINQARRKNKLKRELQDNQKKIRDNQKR.

Belongs to the pole-localizer TmaR family.

Its subcellular location is the cytoplasm. In terms of biological role, pole-localizer protein involved in the regulation of several cellular processes. The protein is Pole-localizer protein TmaR of Aliivibrio salmonicida (strain LFI1238) (Vibrio salmonicida (strain LFI1238)).